Consider the following 378-residue polypeptide: REST corepressor 3 (378 aa).

An ELM2 domain is found at 1-83 (MRVGAEYQAR…KSLADLPNFT (83 aa)). One can recognise an SANT domain in the interval 84 to 135 (PFPDEWTVEDKVLFEQAFSFHGKSFHRIQQMLPDKTIASLVKYYYSWKKTRS). The disordered stretch occupies residues 147–219 (LANRNNQGDS…SQRSKCRPPK (73 aa)). Basic and acidic residues predominate over residues 162 to 184 (EPHPMDGNDSDYDPKKEAKKEGN). Over residues 205–217 (QHRHHSQRSKCRP) the composition is skewed to basic residues. Residues 238-273 (ANTILRRLDMELISLKRQVQNAKQVNSALKQKMEGG) adopt a coiled-coil conformation. The disordered stretch occupies residues 337–356 (TASSTSCCSCSPPSASAAPT).

Belongs to the CoREST family.

It localises to the nucleus. Its function is as follows. May act as a component of a corepressor complex that represses transcription. The polypeptide is REST corepressor 3 (RCOR3) (Gallus gallus (Chicken)).